Here is a 261-residue protein sequence, read N- to C-terminus: Cathepsin G (261 aa).

A signal peptide spans 1-18; that stretch reads MQPLLLLLTFILLQGDEA. A propeptide spans 19-20 (activation peptide); it reads GK. Residues 21–25 form an important for antimicrobial activity region; the sequence is IIGGR. In terms of domain architecture, Peptidase S1 spans 21 to 243; sequence IIGGREARPH…FMPWIKRTMR (223 aa). Cys49 and Cys65 form a disulfide bridge. The active-site Charge relay system is the His64. The N-linked (GlcNAc...) asparagine glycan is linked to Asn71. The interval 97-111 is important for antimicrobial activity; the sequence is HPDYNPQNIRNDIML. The Charge relay system role is filled by Asp108. Cystine bridges form between Cys142–Cys207 and Cys172–Cys186. Ser201 functions as the Charge relay system in the catalytic mechanism.

It belongs to the peptidase S1 family. In adult, detected only in bone marrow where expression is restricted to a small population of early myeloid cells.

Its subcellular location is the cell membrane. The protein resides in the cytoplasmic granule. The protein localises to the secreted. It is found in the cytoplasm. It localises to the cytosol. Its subcellular location is the lysosome. The protein resides in the nucleus. The enzyme catalyses Specificity similar to chymotrypsin C.. Its activity is regulated as follows. Inhibited by chymostatin, phenylmethanesulfonyl fluoride and diisopropyl fluorophosphate. Serine protease with trypsin- and chymotrypsin-like specificity. Also displays antibacterial activity against Gram-negative and Gram-positive bacteria independent of its protease activity. Prefers Phe and Tyr residues in the P1 position of substrates but also cleaves efficiently after Trp and Leu. Shows a preference for negatively charged amino acids in the P2' position and for aliphatic amino acids both upstream and downstream of the cleavage site. Required for recruitment and activation of platelets which is mediated by the F2RL3/PAR4 platelet receptor. Binds reversibly to and stimulates B cells and CD4(+) and CD8(+) T cells. Also binds reversibly to natural killer (NK) cells and enhances NK cell cytotoxicity through its protease activity. Cleaves complement C3. Cleaves vimentin. Cleaves thrombin receptor F2R/PAR1. Cleaves the synovial mucin-type protein PRG4/lubricin. Cleaves and activates IL36G which promotes expression of chemokines CXCL1 and CXLC8 in keratinocytes. Cleaves IL33 into mature forms which have greater activity than the unprocessed form. Cleaves coagulation factor F8 to produce a partially activated form. Also cleaves and activates coagulation factor F10. Cleaves leukocyte cell surface protein SPN/CD43 to release its extracellular domain and trigger its intramembrane proteolysis by gamma-secretase, releasing the CD43 cytoplasmic tail chain (CD43-ct) which translocates to the nucleus. During apoptosis, cleaves SMARCA2/BRM to produce a 160 kDa cleavage product which localizes to the cytosol. Cleaves MBP in B cell lysosomes at '221-Phe-|-Lys-222', degrading the major immunogenic MBP epitope and preventing the activation of MBP-specific autoreactive T cells. Cleaves annexin ANXA1 and antimicrobial peptide CAMP to produce peptides which act on neutrophil N-formyl peptide receptors to enhance the release of CXCL2. Acts as a ligand for the N-formyl peptide receptor FPR1, enhancing phagocyte chemotaxis. Has antibacterial activity against the Gram-negative bacteria N.gonorrhoeae and P.aeruginosa. Likely to act against N.gonorrhoeae by interacting with N.gonorrhoeae penA/PBP2. Exhibits potent antimicrobial activity against the Gram-positive bacterium L.monocytogenes. Has antibacterial activity against the Gram-positive bacterium S.aureus and degrades S.aureus biofilms, allowing polymorphonuclear leukocytes to penetrate the biofilm and phagocytose bacteria. Has antibacterial activity against M.tuberculosis. Induces platelet aggregation which is strongly potentiated in the presence of ELANE. In Mus musculus (Mouse), this protein is Cathepsin G (Ctsg).